A 216-amino-acid chain; its full sequence is MTSNQITIALTKGRIEKDAVTLLEKAGFNMSFMADKGRNLIFESPDNRFRFLLVKAPDVTTYVRHGVADIGIVGKDVLVEHPTGYLEMLDLNFGLCKFCVASTEDYNPNDHKRKRIATKYPTIATDYFNQKGEDVEIISIQGSVEIAPVIGLADAIVDIVETGSTLVANGLKVYEDICRISARMIVNKASLKNNKEVLQFIRKIESLVGNEEVPFE.

This sequence belongs to the ATP phosphoribosyltransferase family. Short subfamily. In terms of assembly, heteromultimer composed of HisG and HisZ subunits.

The protein resides in the cytoplasm. It carries out the reaction 1-(5-phospho-beta-D-ribosyl)-ATP + diphosphate = 5-phospho-alpha-D-ribose 1-diphosphate + ATP. It participates in amino-acid biosynthesis; L-histidine biosynthesis; L-histidine from 5-phospho-alpha-D-ribose 1-diphosphate: step 1/9. In terms of biological role, catalyzes the condensation of ATP and 5-phosphoribose 1-diphosphate to form N'-(5'-phosphoribosyl)-ATP (PR-ATP). Has a crucial role in the pathway because the rate of histidine biosynthesis seems to be controlled primarily by regulation of HisG enzymatic activity. The sequence is that of ATP phosphoribosyltransferase from Streptococcus thermophilus (strain ATCC BAA-491 / LMD-9).